We begin with the raw amino-acid sequence, 272 residues long: Undecaprenyl-diphosphatase (272 aa).

Transmembrane regions (helical) follow at residues S6–S26, A45–W65, T92–I112, L115–A135, Y189–L209, M225–L245, and I251–F271.

This sequence belongs to the UppP family.

The protein resides in the cell inner membrane. It catalyses the reaction di-trans,octa-cis-undecaprenyl diphosphate + H2O = di-trans,octa-cis-undecaprenyl phosphate + phosphate + H(+). Functionally, catalyzes the dephosphorylation of undecaprenyl diphosphate (UPP). Confers resistance to bacitracin. This chain is Undecaprenyl-diphosphatase, found in Pectobacterium carotovorum subsp. carotovorum (strain PC1).